We begin with the raw amino-acid sequence, 208 residues long: Effector protein MavE (208 aa).

Positions 77 to 80 match the NPxY eukaryotic motif motif; that stretch reads NPRY. The chain crosses the membrane as a helical span at residues 184 to 204; sequence VLFPFVAATVAVAATAASVLF.

In terms of assembly, homotrimer.

It localises to the secreted. It is found in the host vacuole. Its subcellular location is the host pathogen-containing vacuole. The protein resides in the host pathogen-containing vacuole membrane. Functionally, virulence effector that is indispensable for endoplasmic reticulum (ER)-mediated remodeling of the Legionella pneumophila-containing vacuole (LCV) and lysosomal evasion. Essential for intracellular replication in human monocyte-derived macrophages (hMDMs) and amoebae, as well as for intrapulmonary proliferation in mice. The protein is Effector protein MavE of Legionella pneumophila subsp. pneumophila (strain Philadelphia 1 / ATCC 33152 / DSM 7513).